A 430-amino-acid chain; its full sequence is MTAKWEKTSGSQGVLTYEAPAEAFDKAVDAAFKTVVKDLNVPGFRKGKLPRPMFNKMYGEEALYQDALDILYRDTIQGAVEEAGFEPIALENIDVDGTLEKGKPVAFKVTFVVEPEAELGEYKGLEYEAVSTEVTEDEVTAELEALQQQGAELAVKEGAIENGDTAVFDFAGFADGEQFEGGTAENYTLEIGSGQFIPGFEEQMIGMTAGEEKDVEVTFPEEYHAENLAGKPATFKVKLHEVKTKQVPELDDEFAKDIDESVSTLDELKASIRERLEAGKKQEAEGTMRDQLVEQATANATIDVPEVLVEQEVDRMVQEFGSRVSSQGIDLNMYFELTGTSEEAMREEMKEQAEERVKARLVLKAIADKEAIEVSDEDAEKELEEMSKLYNIAPDQLRTMLAPQGGLETLKGDLKFRKAIDILVENGKAK.

The PPIase FKBP-type domain occupies G163 to P248.

Belongs to the FKBP-type PPIase family. Tig subfamily.

The protein resides in the cytoplasm. The enzyme catalyses [protein]-peptidylproline (omega=180) = [protein]-peptidylproline (omega=0). Involved in protein export. Acts as a chaperone by maintaining the newly synthesized protein in an open conformation. Functions as a peptidyl-prolyl cis-trans isomerase. The chain is Trigger factor from Exiguobacterium sp. (strain ATCC BAA-1283 / AT1b).